The following is a 656-amino-acid chain: Macrolide export ATP-binding/permease protein MacB (656 aa).

Residues 6–244 (LEVSACYRSF…AAPKTEVIPA (239 aa)) enclose the ABC transporter domain. Position 42 to 49 (42 to 49 (GASGSGKS)) interacts with ATP. A run of 4 helical transmembrane segments spans residues 277 to 297 (FLTM…VALG), 531 to 551 (LLIS…VMNI), 586 to 606 (LVCL…GVVF), and 621 to 641 (SIVA…FLPA).

It belongs to the ABC transporter superfamily. Macrolide exporter (TC 3.A.1.122) family. As to quaternary structure, homodimer. Part of the tripartite efflux system MacAB-TolC, which is composed of an inner membrane transporter, MacB, a periplasmic membrane fusion protein, MacA, and an outer membrane component, TolC. The complex forms a large protein conduit and can translocate molecules across both the inner and outer membranes. Interacts with MacA.

The protein localises to the cell inner membrane. Part of the tripartite efflux system MacAB-TolC. MacB is a non-canonical ABC transporter that contains transmembrane domains (TMD), which form a pore in the inner membrane, and an ATP-binding domain (NBD), which is responsible for energy generation. Confers resistance against macrolides. The chain is Macrolide export ATP-binding/permease protein MacB from Shewanella sp. (strain ANA-3).